A 306-amino-acid polypeptide reads, in one-letter code: Ubiquitin carboxyl-terminal hydrolase RPN11 (306 aa).

Residue methionine 1 is modified to N-acetylmethionine. Residues 1–20 (MERLQRLMMNSKVGSADTGR) form a disordered region. The MPN domain occupies 27 to 162 (VYISSIALLK…IDAFRLIDTG (136 aa)). The Zn(2+) site is built by histidine 109, histidine 111, and aspartate 122. The JAMM motif motif lies at 109-122 (HSHPGFGCWLSSVD).

This sequence belongs to the peptidase M67A family. As to quaternary structure, component of the lid subcomplex of the 19S proteasome regulatory particle complex (also named PA700 complex). The 26S proteasome consists of a 20S proteasome core and two 19S regulatory subunits. Interacts directly with RPN8 and STS1. Post-translationally, N-acetylated by NAT3.

It catalyses the reaction Thiol-dependent hydrolysis of ester, thioester, amide, peptide and isopeptide bonds formed by the C-terminal Gly of ubiquitin (a 76-residue protein attached to proteins as an intracellular targeting signal).. Component of the lid subcomplex of the 26S proteasome, a multiprotein complex involved in the ATP-dependent degradation of ubiquitinated proteins. RPN11 is the only catalytically active member of the lid and serves as the essential deubiquitinase of the proteasome. The polypeptide is Ubiquitin carboxyl-terminal hydrolase RPN11 (RPN11) (Saccharomyces cerevisiae (strain ATCC 204508 / S288c) (Baker's yeast)).